Here is a 370-residue protein sequence, read N- to C-terminus: Phenylalanine dehydrogenase (370 aa).

Arg44 contributes to the NAD(+) binding site. L-phenylalanine is bound at residue Lys68. Catalysis depends on Lys80, which acts as the Proton donor/acceptor. Position 114–115 (114–115) interacts with L-phenylalanine; sequence TD. Residues Asp115, Ser146, Thr150, 180-186, 203-204, 243-244, and 264-266 contribute to the NAD(+) site; these read GLGKVGF, DV, AI, and AAN. Asn266 is an L-phenylalanine binding site.

It belongs to the Glu/Leu/Phe/Val dehydrogenases family.

The enzyme catalyses L-phenylalanine + NAD(+) + H2O = 3-phenylpyruvate + NH4(+) + NADH + H(+). It participates in amino-acid biosynthesis; L-phenylalanine biosynthesis; L-phenylalanine from phenylpyruvate (PDH route): step 1/1. Functionally, catalyzes the reversible NAD(+)-dependent oxidative deamination of L-phenylalanine to phenylpyruvate. The sequence is that of Phenylalanine dehydrogenase from Caldalkalibacillus thermarum (strain TA2.A1).